A 522-amino-acid chain; its full sequence is GMP synthase [glutamine-hydrolyzing] (522 aa).

The 196-residue stretch at 9 to 204 (KILILDFGAQ…VVDICGCQML (196 aa)) folds into the Glutamine amidotransferase type-1 domain. Cys86 (nucleophile) is an active-site residue. Active-site residues include His178 and Glu180. A GMPS ATP-PPase domain is found at 205 to 397 (WTAANIIEDQ…LGLPHAMVYR (193 aa)). Residue 232–238 (SGGVDSS) coordinates ATP.

Homodimer.

It catalyses the reaction XMP + L-glutamine + ATP + H2O = GMP + L-glutamate + AMP + diphosphate + 2 H(+). The protein operates within purine metabolism; GMP biosynthesis; GMP from XMP (L-Gln route): step 1/1. In terms of biological role, catalyzes the synthesis of GMP from XMP. The protein is GMP synthase [glutamine-hydrolyzing] (guaA) of Xylella fastidiosa (strain 9a5c).